The chain runs to 39 residues: MGFYSGYSGGYSGGGYGSSFVLIVVLFILLIIVGATFLY.

The helical transmembrane segment at 19-39 threads the bilayer; sequence SFVLIVVLFILLIIVGATFLY.

It belongs to the SscA family.

The protein resides in the membrane. This chain is SPbeta prophage-derived membrane protein YosA (yosA), found in Bacillus subtilis (strain 168).